The primary structure comprises 158 residues: G-protein-signaling modulator 3 (158 aa).

The interval 1–53 is disordered; it reads MEAERPQEDGEQSLPQDDQGWPPVNSTARPWRSAPPSPPPPGTRHTALGPRSG. Phosphoserine occurs at positions 33 and 37. Over residues 33–42 the composition is skewed to pro residues; the sequence is SAPPSPPPPG. Over residues 43-53 the composition is skewed to low complexity; it reads TRHTALGPRSG. Phosphoserine occurs at positions 54 and 57. T60 carries the post-translational modification Phosphothreonine. The 23-residue stretch at 60-82 folds into the GoLoco 1 domain; that stretch reads TELLLDLVAEAQSRRLEEQRAAF. The interval 78–97 is disordered; the sequence is QRAAFHTPKVPPSLAPTPPR. Pro residues predominate over residues 86-96; the sequence is KVPPSLAPTPP. GoLoco domains follow at residues 102–124 and 130–153; these read KEQLYSTILSHQCQRIEAQRSDP and GQELLELLLRVQGGGRMEDQRSRP.

It localises to the cytoplasm. Interacts with subunit of G(i) alpha proteins and regulates the activation of G(i) alpha proteins. The chain is G-protein-signaling modulator 3 (Gpsm3) from Rattus norvegicus (Rat).